Here is a 208-residue protein sequence, read N- to C-terminus: Coiled-coil domain-containing protein 25 (208 aa).

Residues 1–105 (MVFYFTSSSV…SNLKKTADMD (105 aa)) are Extracellular-facing. The segment at 21-25 (KDKYE) is DNA-binding. An N6-acetyllysine modification is found at Lys-23. Residues 106–122 (VGQIGFHRQKDVKIVTV) form a helical membrane-spanning segment. Positions 117–187 (VKIVTVEKKV…REMDELRSYS (71 aa)) form a coiled coil. Residues 123–208 (EKKVNEILNR…QDGNDSDEFM (86 aa)) are Cytoplasmic-facing. The span at 144–184 (LAAEKEGRDREERNEKKAQIQEMKRKEKEEMKKKREMDELR) shows a compositional bias: basic and acidic residues. Positions 144-208 (LAAEKEGRDR…QDGNDSDEFM (65 aa)) are disordered. Position 204 is a phosphoserine (Ser-204).

It belongs to the CCDC25 family. Interacts (via cytoplasmic region) with ILK.

The protein localises to the cell membrane. Its subcellular location is the endomembrane system. Transmembrane receptor that senses neutrophil extracellular traps (NETs) and triggers the ILK-PARVB pathway to enhance cell motility. NETs are mainly composed of DNA fibers and are released by neutrophils to bind pathogens during inflammation. Formation of NETs is also associated with cancer metastasis, NET-DNA acting as a chemotactic factor to attract cancer cells. Specifically binds NETs on its extracellular region, in particular the 8-OHdG-enriched DNA present in NETs, and recruits ILK, initiating the ILK-PARVB cascade to induce cytoskeleton rearrangement and directional migration of cells. In the context of cancer, promotes cancer metastasis by sensing NETs and promoting migration of tumor cells. In Mus musculus (Mouse), this protein is Coiled-coil domain-containing protein 25.